Consider the following 363-residue polypeptide: UDP-3-O-acylglucosamine N-acyltransferase (363 aa).

The Proton acceptor role is filled by histidine 266.

This sequence belongs to the transferase hexapeptide repeat family. LpxD subfamily. As to quaternary structure, homotrimer.

The catalysed reaction is a UDP-3-O-[(3R)-3-hydroxyacyl]-alpha-D-glucosamine + a (3R)-hydroxyacyl-[ACP] = a UDP-2-N,3-O-bis[(3R)-3-hydroxyacyl]-alpha-D-glucosamine + holo-[ACP] + H(+). Its pathway is bacterial outer membrane biogenesis; LPS lipid A biosynthesis. Catalyzes the N-acylation of UDP-3-O-acylglucosamine using 3-hydroxyacyl-ACP as the acyl donor. Is involved in the biosynthesis of lipid A, a phosphorylated glycolipid that anchors the lipopolysaccharide to the outer membrane of the cell. In Bordetella parapertussis (strain 12822 / ATCC BAA-587 / NCTC 13253), this protein is UDP-3-O-acylglucosamine N-acyltransferase.